Here is a 513-residue protein sequence, read N- to C-terminus: E3 ubiquitin-protein ligase RNF25 (513 aa).

Residues Ser-9–Ser-117 form the RWD domain. Zn(2+)-binding residues include Cys-124, Cys-127, Cys-142, His-144, His-147, Cys-150, Cys-187, and Cys-190. The RING-type; atypical zinc-finger motif lies at Cys-124–Arg-191. The disordered stretch occupies residues Asn-261 to Leu-513. Over residues Ser-271–Gln-297 the composition is skewed to low complexity. Polar residues-rich tracts occupy residues Ser-345–Leu-397 and Glu-406–Leu-423. The span at Gly-426–Gly-440 shows a compositional bias: basic and acidic residues. Gly residues predominate over residues Ala-482–Gly-498. The span at Gln-501–Leu-513 shows a compositional bias: basic and acidic residues.

Belongs to the RNF25 family.

The protein localises to the cytoplasm. The catalysed reaction is S-ubiquitinyl-[E2 ubiquitin-conjugating enzyme]-L-cysteine + [acceptor protein]-L-lysine = [E2 ubiquitin-conjugating enzyme]-L-cysteine + N(6)-ubiquitinyl-[acceptor protein]-L-lysine.. The protein operates within protein modification; protein ubiquitination. Its function is as follows. E3 ubiquitin-protein ligase that plays a key role in the RNF14-RNF25 translation quality control pathway, a pathway that takes place when a ribosome has stalled during translation, and which promotes ubiquitination and degradation of translation factors on stalled ribosomes. May also acts as a positive regulator of the Wnt signaling. The sequence is that of E3 ubiquitin-protein ligase RNF25 from Danio rerio (Zebrafish).